The primary structure comprises 396 residues: Elongation factor Tu 1 (396 aa).

The region spanning Lys10–Lys206 is the tr-type G domain. Residues Gly19–Thr26 are G1. GTP is bound at residue Gly19–Thr26. Residue Thr26 participates in Mg(2+) binding. The tract at residues Gly60 to Ser64 is G2. The interval Asp81 to Gly84 is G3. GTP contacts are provided by residues Asp81–His85 and Asn136–Asp139. A G4 region spans residues Asn136–Asp139. The segment at Ser174–Leu176 is G5.

The protein belongs to the TRAFAC class translation factor GTPase superfamily. Classic translation factor GTPase family. EF-Tu/EF-1A subfamily. As to quaternary structure, monomer.

The protein localises to the cytoplasm. The catalysed reaction is GTP + H2O = GDP + phosphate + H(+). GTP hydrolase that promotes the GTP-dependent binding of aminoacyl-tRNA to the A-site of ribosomes during protein biosynthesis. The protein is Elongation factor Tu 1 of Ruthia magnifica subsp. Calyptogena magnifica.